Here is a 212-residue protein sequence, read N- to C-terminus: RNA chaperone ProQ (212 aa).

Composition is skewed to basic and acidic residues over residues 102 to 124 and 132 to 144; these read ALKESKERVFASRRTNTKEEKAK and RKADAAAKSDKPK. The tract at residues 102–149 is disordered; sequence ALKESKERVFASRRTNTKEEKAKQPRRPAPRKADAAAKSDKPKAAPKA.

This sequence belongs to the ProQ family.

The protein localises to the cytoplasm. RNA chaperone with significant RNA binding, RNA strand exchange and RNA duplexing activities. This is RNA chaperone ProQ from Aeromonas hydrophila subsp. hydrophila (strain ATCC 7966 / DSM 30187 / BCRC 13018 / CCUG 14551 / JCM 1027 / KCTC 2358 / NCIMB 9240 / NCTC 8049).